We begin with the raw amino-acid sequence, 123 residues long: Small ribosomal subunit protein uS12c (123 aa).

Belongs to the universal ribosomal protein uS12 family. Part of the 30S ribosomal subunit.

It localises to the plastid. Its subcellular location is the chloroplast. In terms of biological role, with S4 and S5 plays an important role in translational accuracy. Located at the interface of the 30S and 50S subunits. The protein is Small ribosomal subunit protein uS12c (rps12) of Chara vulgaris (Common stonewort).